The following is a 1397-amino-acid chain: MKDLLDIMRKKTDSDGHAPVEFDRIRIGLASPEMIKSWSHGEVKKPETINYRTFKPERDGLFCAKIFGPVKDYECLCGKYKRMKYKGVICEKCGVEVTTAKVRRERMGHIELASPVAHIWFLKSLPSRIGLLLDMTLRDIERVLYFESYVVTDPGMTPFEKYQLLNDEEYFTALEEHGDEFVAKMGAEAVQDLLKDIDLEAEISRLREEIPQTTSETKLKKASKRLKLMEAFKDSNNKPEWMVMNVLPVLPPDLRPLVPLEGGRFATSDLNDLYRRVINRNNRLKRLLDLAAPDIIVRNEKRMLQESVDALLDNGRRGRAITGSNKRPLKSLADMIKGKQGRFRQNLLGKRVDYSGRSVITVGPTLRLHQCGLPKKMALELFKPFIFAKLQASGQATTIKAAKKMVERETPEVWDVLASVIRQHPVMLNRAPTLHRLGLQAFEPILIEGKAIRLHPLVCAAFNADFDGDQMAVHVPLTLEAQLEARALMMSTNNILSPANGEPIIVPSQDVVLGLYYITRDAVNAKGEGMVFADTHEVNRALATGQVAIHARVKVRVHQTVINENGEREQQTIIVDTTPGRCLLWEVVPEGLSFDMINLEMTKKNISKLINSCYRKLGLKDTVIFADQLMYLGFRQATRSGVSVGMEDMLIPPTKHTIIDKAETEVREIEQQFEQGFVTAGERYNKVVDIWARTNDQVAKAMMDNLSYTLVKNKQGEDEKQKSFNSIYMMSDSGARGSAAQIRQLAGMRGLMAKPDGSIIETPIKANFREGLTVLQYFISTHGARKGLADTALKTANSGYLTRRLVDVAQDLVITEPDCGTSGGLVMTPFIQGGDVIEPLRDRVLGRVTAEDVRRASDDEVVLPRGTLIDEKIAAQLEEAGVDEVKVRSVIACESTFGVCAKCYGRDLARGHLVNPGESVGVMAAQSIGEPGTQLTMRTFHVGGAASRTSAANSVQVRNKGTVRFHNVKTVQHAKGHLVSVSRSGEIGIADELGRERERYKLPYGASILLKDGELVEAGGIVATWDPHTHPLVTEVAGKARFSQIADGVTATSKTDDATGMTTVEILPVTARPASGKDLRPAIVLDTTDGGEQFYFLPQNTIVTVRDGETIGVGDVIGRVPQESSRTRDITGGLPRVADLFEARKPKEHAILAEVSGIVSFGKETKGKNRLVITPDDGSEIYEELIPKWRQINVFEGEHVNRGETISDGPQNPHDILRLKGEVALTNYIVNEVQDVYRLQGVKINDKHIEVIVRQMLRKVDIIDGGDTSFIKGEQVDYIRVVQENQAVLAQNKFPAKFERQLMGITKASLSTDSFISAASFQETTRVLTEAAVTGKEDDLRGLKENVVVGRLIPAGTGLAYHLERRRQEAEAAEHALHNDFSEVDQAFSQALNSEQF.

The Zn(2+) site is built by Cys-75, Cys-77, Cys-90, and Cys-93. Mg(2+)-binding residues include Asp-465, Asp-467, and Asp-469. Zn(2+) contacts are provided by Cys-819, Cys-893, Cys-900, and Cys-903.

This sequence belongs to the RNA polymerase beta' chain family. In terms of assembly, the RNAP catalytic core consists of 2 alpha, 1 beta, 1 beta' and 1 omega subunit. When a sigma factor is associated with the core the holoenzyme is formed, which can initiate transcription. Requires Mg(2+) as cofactor. The cofactor is Zn(2+).

The catalysed reaction is RNA(n) + a ribonucleoside 5'-triphosphate = RNA(n+1) + diphosphate. In terms of biological role, DNA-dependent RNA polymerase catalyzes the transcription of DNA into RNA using the four ribonucleoside triphosphates as substrates. The chain is DNA-directed RNA polymerase subunit beta' from Acinetobacter baumannii (strain ACICU).